The sequence spans 179 residues: MTLASAEKEMVGVLTFFQKETRGFRTGKAHPALVETVTVEVYGTTMRLSDIASISVSDMRQLLLSPYDAGTVSAISKGILAANLNLQPIVEGATVRINVPEPTEEYRREVIKQLKRKSEEAKVAIRNIRRTFNDRLKKDDNLTEDAVKSLEKKIQELTDKFCKQIEELAKQKEAELATV.

This sequence belongs to the RRF family.

It localises to the cytoplasm. Its function is as follows. Responsible for the release of ribosomes from messenger RNA at the termination of protein biosynthesis. May increase the efficiency of translation by recycling ribosomes from one round of translation to another. This Chlamydia trachomatis serovar D (strain ATCC VR-885 / DSM 19411 / UW-3/Cx) protein is Ribosome-recycling factor.